Here is an 83-residue protein sequence, read N- to C-terminus: Apolipoprotein C-I, basic form (83 aa).

The first 26 residues, 1–26, serve as a signal peptide directing secretion; the sequence is MRLFLSLPVLVVVLSIVLEGPAPAQG.

The protein belongs to the apolipoprotein C1 family.

It localises to the secreted. Inhibitor of lipoprotein binding to the low density lipoprotein (LDL) receptor, LDL receptor-related protein, and very low density lipoprotein (VLDL) receptor. Associates with high density lipoproteins (HDL) and the triacylglycerol-rich lipoproteins in the plasma and makes up about 10% of the protein of the VLDL and 2% of that of HDL. Appears to interfere directly with fatty acid uptake and is also the major plasma inhibitor of cholesteryl ester transfer protein (CETP). Binds free fatty acids and reduces their intracellular esterification. Modulates the interaction of APOE with beta-migrating VLDL and inhibits binding of beta-VLDL to the LDL receptor-related protein. The sequence is that of Apolipoprotein C-I, basic form (APOC1B) from Pan troglodytes (Chimpanzee).